The chain runs to 528 residues: Extracellular serine/threonine protein CG31145 (528 aa).

The Cytoplasmic portion of the chain corresponds to 1 to 12; that stretch reads MAVLRTMKLKER. Residues 1 to 76 constitute a propeptide that is removed on maturation; sequence MAVLRTMKLK…LHEFKRKFLQ (76 aa). The chain crosses the membrane as a helical span at residues 13 to 33; that stretch reads LVISLGATLVLLTLLLIVDVQ. Residues 34 to 528 lie on the Lumenal side of the membrane; the sequence is MDFGVANRHL…VDGSETDVSS (495 aa). The interval 77 to 130 is disordered; the sequence is KSNASGSKEASTQAGASQSGGATSGQDAAAGASGGAAGPGTSRSTSTRKPTPHD. A glycan (N-linked (GlcNAc...) asparagine) is linked at asparagine 79. The segment covering 86-107 has biased composition (low complexity); the sequence is ASTQAGASQSGGATSGQDAAAG. Asparagine 173 is a glycosylation site (N-linked (GlcNAc...) asparagine). Residues glutamine 220, lysine 236, and glutamate 257 each coordinate ATP. Glutamate 257 contacts Mn(2+). Residue asparagine 286 is glycosylated (N-linked (GlcNAc...) asparagine). Cystine bridges form between cysteine 312-cysteine 328 and cysteine 317-cysteine 321. 339-342 contacts ATP; it reads AAFL. 2 disulfide bridges follow: cysteine 376–cysteine 450 and cysteine 451–cysteine 510. Aspartate 408 is an active-site residue. Glutamate 413 is a binding site for ATP. Residue asparagine 420 is glycosylated (N-linked (GlcNAc...) asparagine). Aspartate 428 contributes to the ATP binding site. Residue aspartate 428 participates in Mn(2+) binding.

This sequence belongs to the FAM20 family. It depends on Mn(2+) as a cofactor. In embryos, prominently expressed in midline glia, salivary gland, intestine and dorsal vessel (heart). Not associated with biomineralization.

It localises to the golgi apparatus membrane. The protein localises to the secreted. The enzyme catalyses L-seryl-[protein] + ATP = O-phospho-L-seryl-[protein] + ADP + H(+). It catalyses the reaction L-threonyl-[protein] + ATP = O-phospho-L-threonyl-[protein] + ADP + H(+). Its function is as follows. Golgi serine/threonine protein kinase that phosphorylates secretory pathway proteins within Ser-x-Glu/pSer motifs. The polypeptide is Extracellular serine/threonine protein CG31145 (Drosophila melanogaster (Fruit fly)).